A 334-amino-acid polypeptide reads, in one-letter code: Probable fructose-bisphosphate aldolase class 1 (334 aa).

Belongs to the class I fructose-bisphosphate aldolase family.

The catalysed reaction is beta-D-fructose 1,6-bisphosphate = D-glyceraldehyde 3-phosphate + dihydroxyacetone phosphate. It participates in carbohydrate degradation; glycolysis; D-glyceraldehyde 3-phosphate and glycerone phosphate from D-glucose: step 4/4. This Xanthomonas axonopodis pv. citri (strain 306) protein is Probable fructose-bisphosphate aldolase class 1.